A 211-amino-acid chain; its full sequence is Pyridoxine/pyridoxamine 5'-phosphate oxidase (211 aa).

Residues 7-10 (RREY) and Lys65 each bind substrate. FMN contacts are provided by residues 60-65 (RIVLLK), 75-76 (YT), Arg81, Lys82, and Gln104. Residues Tyr122, Arg126, and Ser130 each coordinate substrate. Residues 139 to 140 (QS) and Trp184 each bind FMN. 190–192 (RLH) is a binding site for substrate. Arg194 is an FMN binding site.

This sequence belongs to the pyridoxamine 5'-phosphate oxidase family. In terms of assembly, homodimer. Requires FMN as cofactor.

It carries out the reaction pyridoxamine 5'-phosphate + O2 + H2O = pyridoxal 5'-phosphate + H2O2 + NH4(+). The enzyme catalyses pyridoxine 5'-phosphate + O2 = pyridoxal 5'-phosphate + H2O2. Its pathway is cofactor metabolism; pyridoxal 5'-phosphate salvage; pyridoxal 5'-phosphate from pyridoxamine 5'-phosphate: step 1/1. The protein operates within cofactor metabolism; pyridoxal 5'-phosphate salvage; pyridoxal 5'-phosphate from pyridoxine 5'-phosphate: step 1/1. Catalyzes the oxidation of either pyridoxine 5'-phosphate (PNP) or pyridoxamine 5'-phosphate (PMP) into pyridoxal 5'-phosphate (PLP). This chain is Pyridoxine/pyridoxamine 5'-phosphate oxidase, found in Vibrio cholerae serotype O1 (strain ATCC 39315 / El Tor Inaba N16961).